We begin with the raw amino-acid sequence, 181 residues long: ATP-dependent protease subunit HslV (181 aa).

Thr-7 is a catalytic residue. Residues Ala-166, Cys-169, and Thr-172 each contribute to the Na(+) site.

This sequence belongs to the peptidase T1B family. HslV subfamily. A double ring-shaped homohexamer of HslV is capped on each side by a ring-shaped HslU homohexamer. The assembly of the HslU/HslV complex is dependent on binding of ATP.

It is found in the cytoplasm. The catalysed reaction is ATP-dependent cleavage of peptide bonds with broad specificity.. With respect to regulation, allosterically activated by HslU binding. Functionally, protease subunit of a proteasome-like degradation complex believed to be a general protein degrading machinery. The chain is ATP-dependent protease subunit HslV from Anaeromyxobacter sp. (strain Fw109-5).